The following is a 299-amino-acid chain: NAD kinase (299 aa).

Residue D71 is the Proton acceptor of the active site. NAD(+) contacts are provided by residues 71–72 (DG), 145–146 (ND), R173, D175, 186–191 (TAYALS), A210, and Q248.

This sequence belongs to the NAD kinase family. Requires a divalent metal cation as cofactor.

It is found in the cytoplasm. It catalyses the reaction NAD(+) + ATP = ADP + NADP(+) + H(+). In terms of biological role, involved in the regulation of the intracellular balance of NAD and NADP, and is a key enzyme in the biosynthesis of NADP. Catalyzes specifically the phosphorylation on 2'-hydroxyl of the adenosine moiety of NAD to yield NADP. In Bordetella avium (strain 197N), this protein is NAD kinase.